We begin with the raw amino-acid sequence, 219 residues long: Deoxyribose-phosphate aldolase (219 aa).

Asp-92 (proton donor/acceptor) is an active-site residue. Lys-154 (schiff-base intermediate with acetaldehyde) is an active-site residue. The active-site Proton donor/acceptor is the Lys-183.

This sequence belongs to the DeoC/FbaB aldolase family. DeoC type 1 subfamily.

It is found in the cytoplasm. The enzyme catalyses 2-deoxy-D-ribose 5-phosphate = D-glyceraldehyde 3-phosphate + acetaldehyde. The protein operates within carbohydrate degradation; 2-deoxy-D-ribose 1-phosphate degradation; D-glyceraldehyde 3-phosphate and acetaldehyde from 2-deoxy-alpha-D-ribose 1-phosphate: step 2/2. Its function is as follows. Catalyzes a reversible aldol reaction between acetaldehyde and D-glyceraldehyde 3-phosphate to generate 2-deoxy-D-ribose 5-phosphate. The sequence is that of Deoxyribose-phosphate aldolase from Dictyoglomus turgidum (strain DSM 6724 / Z-1310).